Here is a 522-residue protein sequence, read N- to C-terminus: 2-isopropylmalate synthase (522 aa).

The 263-residue stretch at 5–267 (VIIFDTTLRD…DCGINAKEIH (263 aa)) folds into the Pyruvate carboxyltransferase domain. Positions 14, 202, 204, and 238 each coordinate Mn(2+). Residues 392–522 (QLQHMMVHSD…IHKERELGGV (131 aa)) are regulatory domain.

It belongs to the alpha-IPM synthase/homocitrate synthase family. LeuA type 1 subfamily. In terms of assembly, homodimer. It depends on Mn(2+) as a cofactor.

Its subcellular location is the cytoplasm. The enzyme catalyses 3-methyl-2-oxobutanoate + acetyl-CoA + H2O = (2S)-2-isopropylmalate + CoA + H(+). Its pathway is amino-acid biosynthesis; L-leucine biosynthesis; L-leucine from 3-methyl-2-oxobutanoate: step 1/4. Functionally, catalyzes the condensation of the acetyl group of acetyl-CoA with 3-methyl-2-oxobutanoate (2-ketoisovalerate) to form 3-carboxy-3-hydroxy-4-methylpentanoate (2-isopropylmalate). The chain is 2-isopropylmalate synthase from Shewanella frigidimarina (strain NCIMB 400).